Consider the following 523-residue polypeptide: Transcription factor MYB120 (523 aa).

2 consecutive HTH myb-type domains span residues 23-75 and 76-130; these read GVIL…ANHL and RPNL…KRLL. 2 DNA-binding regions (H-T-H motif) span residues 51–75 and 103–126; these read WNAVQKNTGLARCGKSCRLRWANHL and WARMAAQLPGRTDNEIKNYWNTRL. Disordered stretches follow at residues 140–254, 332–373, 396–426, and 444–470; these read DIIP…YPTL, QTAT…SHYT, QIPQIDGFNNVNNFTDNERQNHNLNSSGAHR, and LASGGRGRPPKRRQLTASLPNHNNNTN. The span at 147 to 167 shows a compositional bias: basic residues; sequence LHPHPHHQQQQQHNHHHHHHQ. The span at 175–185 shows a compositional bias: polar residues; that stretch reads MYFQPQSSQRN. 3 stretches are compositionally biased toward low complexity: residues 202–212, 223–232, and 341–368; these read SSSSFTFHTTT, TPNTPSQLSS, and NPYSSSPSFSLNPSSSSYPTSTSSPSFL. Residues 396–410 show a composition bias toward polar residues; that stretch reads QIPQIDGFNNVNNFT.

Expressed in pollen grains and pollen tube. Mostly expressed in mature pollen grains, and, to a lower extent, in inflorescences and siliques.

It localises to the nucleus. In terms of biological role, transcription activator. Binds to 5'-CAACTGTC-3' and/or 5'-TAACAAA-3' motif in target gene promoter to promote their expression. Together with MYB97 and MYB101, functions as a male factor that controls pollen tube-synergid interaction in fertilization. Required for pollen tube growth arrest and sperm cell release in the female gametophyte, probably via the regulation of pollen tube-specific gene expression. The sequence is that of Transcription factor MYB120 from Arabidopsis thaliana (Mouse-ear cress).